We begin with the raw amino-acid sequence, 66 residues long: Large ribosomal subunit protein bL35 (66 aa).

Over residues 1–14 (MPKMKTKSAAKKRF) the composition is skewed to basic residues. Residues 1–34 (MPKMKTKSAAKKRFSMTATGKVKAGPAGKRHGMI) form a disordered region.

This sequence belongs to the bacterial ribosomal protein bL35 family.

In Paracoccus denitrificans (strain Pd 1222), this protein is Large ribosomal subunit protein bL35.